Reading from the N-terminus, the 353-residue chain is Uroporphyrinogen decarboxylase (353 aa).

Substrate contacts are provided by residues 27–31 (RQAGR), phenylalanine 46, aspartate 76, tyrosine 152, serine 207, and histidine 321.

This sequence belongs to the uroporphyrinogen decarboxylase family. In terms of assembly, homodimer.

It is found in the cytoplasm. It catalyses the reaction uroporphyrinogen III + 4 H(+) = coproporphyrinogen III + 4 CO2. Its pathway is porphyrin-containing compound metabolism; protoporphyrin-IX biosynthesis; coproporphyrinogen-III from 5-aminolevulinate: step 4/4. In terms of biological role, catalyzes the decarboxylation of four acetate groups of uroporphyrinogen-III to yield coproporphyrinogen-III. This Listeria monocytogenes serotype 4b (strain F2365) protein is Uroporphyrinogen decarboxylase.